Consider the following 536-residue polypeptide: MNSHASNGRSRNWPHALLESALLTSALLMASSVALANAPAVPEAPKALVKELHQAKTYTITSPPTGPLEMAKPVLPDLSGYTTEAALKKIARNKPGKITVARMMEETGLKEFIGGDNKMAEWVVRQKGIPQAIMISDGYVNLQDLVKKVPKQFLSEVSPGVYVARLPILVKETGIFEIDSKTKELRLSQEKGSFIVSEGKMLITNTSVNAWSETRNGLAAYRTPDEFRPFVLTWGGSQTWIAKTKMASMGYNQSKSYGVSISQYTPNTAKVLKRGEPTGWIIDSEFADMWYGFYCYETRDFVVKGNTYRDNIVYGIDPHDRSHGLIIAENDVYGTKKKHGIIISREVDNSFIFRNKSHNNKLSGVVLDRNSVGNIVAYNEIYQNHTDGITLYESGNNLLWGNRVIANRRHGIRVRNSVNIKLYENVAMANGLMGVYGHIKDLNDTDRDIELDPFDAQVSLIMVGGELSSNGSGPLSIDSPLSVELYRVSMLMPTKEVGISLNGILGERQDEILDLLVRQKKAVLIDPVESQTELRE.

A signal peptide spans 1 to 36 (MNSHASNGRSRNWPHALLESALLTSALLMASSVALA). 5 PbH1 repeats span residues 298 to 320 (TRDF…DPHD), 322 to 345 (SHGL…IISR), 347 to 369 (VDNS…VLDR), 371 to 393 (SVGN…TLYE), and 394 to 416 (SGNN…RVRN). Residue H319 is the Proton acceptor of the active site.

It belongs to the D-mannuronate C5-epimerase family.

The protein resides in the periplasm. The enzyme catalyses [(1-&gt;4)-beta-D-mannuronosyl](n) = [alginate](n). Its pathway is glycan biosynthesis; alginate biosynthesis. Its function is as follows. Catalyzes the epimerization of beta-D-mannuronate to alpha-L-guluronate during the synthesis of the linear polysaccharide alginate. In addition, is part of a periplasmic protein complex that protects alginate from degradation by AlgL by channeling the newly formed alginate polymer through a scaffold that transfers the alginate polymer through the periplasmic space to the outer membrane secretin AlgE. The protein is Mannuronan C5-epimerase (algG) of Pseudomonas syringae pv. tomato (strain ATCC BAA-871 / DC3000).